A 164-amino-acid chain; its full sequence is Interferon gamma (164 aa).

A signal peptide spans 1–19; it reads MTCQTYNLFVLSVIMIYYG. N-linked (GlcNAc...) asparagine glycans are attached at residues N42 and N61.

Belongs to the type II (or gamma) interferon family. Homodimer.

It localises to the secreted. Produced by lymphocytes activated by specific antigens or mitogens. IFN-gamma, in addition to having antiviral activity, has important immunoregulatory functions. It is a potent activator of macrophages, it has antiproliferative effects on transformed cells and it can potentiate the antiviral and antitumor effects of the type I interferons. The sequence is that of Interferon gamma (IFNG) from Coturnix japonica (Japanese quail).